The chain runs to 44 residues: U17-ctenitoxin-Co1a (44 aa).

Disulfide bonds link C3/C20, C10/C26, C19/C40, and C28/C38.

In terms of tissue distribution, expressed by the venom gland.

The protein localises to the secreted. Its function is as follows. Omega-agatoxins are antagonists of voltage-sensitive calcium channels (Cav). Toxic to mice by intracerebroventricular injection. The chain is U17-ctenitoxin-Co1a from Ctenus ornatus (Brazilian spider).